The primary structure comprises 141 residues: Cell division protein SepF (141 aa).

Belongs to the SepF family. Homodimer. Interacts with FtsZ.

It localises to the cytoplasm. Its function is as follows. Cell division protein that is part of the divisome complex and is recruited early to the Z-ring. Probably stimulates Z-ring formation, perhaps through the cross-linking of FtsZ protofilaments. Its function overlaps with FtsA. The polypeptide is Cell division protein SepF (Anoxybacillus flavithermus (strain DSM 21510 / WK1)).